Here is a 1182-residue protein sequence, read N- to C-terminus: WD repeat-containing protein on Y chromosome (1182 aa).

WD repeat units lie at residues 155 to 199 (EEIT…LRSA), 323 to 362 (RIPL…EPSA), 366 to 405 (GHNG…LLQT), 456 to 495 (THAA…RKII), 508 to 547 (TIDI…VVRN), 595 to 635 (FHTD…RRYN), 740 to 779 (KTGD…IPKA), and 823 to 862 (GHLK…LGTL). Residues 1031–1182 (TKAGANLDQP…PKAKTDRETH (152 aa)) are disordered. 2 stretches are compositionally biased toward low complexity: residues 1079–1092 (GVSS…VSQG) and 1103–1121 (TTSL…PKGS).

The chain is WD repeat-containing protein on Y chromosome from Drosophila virilis (Fruit fly).